The chain runs to 649 residues: Mitochondrial Rho GTPase 1 (649 aa).

The Cytoplasmic portion of the chain corresponds to 1 to 623 (MTKETIRVVI…KPTNIDYSSA (623 aa)). Residues 3 to 176 (KETIRVVICG…FYLCQRSISY (174 aa)) form the Miro 1 domain. GTP-binding positions include 12-19 (GDDGVGKT), 61-63 (DTD), and 115-118 (NKCD). 2 consecutive EF-hand domains span residues 192–227 (SAVA…CFGK) and 320–355 (KGYR…TPGL). Positions 205, 207, 209, 216, 333, 335, 337, and 344 each coordinate Ca(2+). One can recognise a Miro 2 domain in the interval 436 to 601 (RKVFNCFVVG…FKKIIQASLE (166 aa)). GTP is bound by residues 445–452 (GKRNSGKS), 481–485 (EVTGD), and 550–553 (LKAD). Residues 624-644 (VILGSSIGFLALFSYTMIKLL) traverse the membrane as a helical; Anchor for type IV membrane protein segment. Residues 645–649 (KPTQQ) lie on the Mitochondrial intermembrane side of the membrane.

This sequence belongs to the mitochondrial Rho GTPase family.

The protein localises to the mitochondrion outer membrane. Mitochondrial GTPase involved in mitochondrial trafficking. Probably involved in control of anterograde transport of mitochondria and their subcellular distribution. In Candida glabrata (strain ATCC 2001 / BCRC 20586 / JCM 3761 / NBRC 0622 / NRRL Y-65 / CBS 138) (Yeast), this protein is Mitochondrial Rho GTPase 1 (GEM1).